Consider the following 1634-residue polypeptide: Protein TIC 214 (1634 aa).

Helical transmembrane passes span 25-45 (FIIG…YVAL), 53-73 (ILAL…SFFA), 94-116 (HFIL…LITI), 133-153 (FAWF…LVWI), and 172-192 (IFVI…SIQC). 2 disordered regions span residues 216–242 (RERL…SESE) and 1365–1395 (QQKS…STKS). The span at 1386–1395 (KYLEEDSTKS) shows a compositional bias: basic and acidic residues.

This sequence belongs to the TIC214 family. As to quaternary structure, part of the Tic complex.

Its subcellular location is the plastid. The protein localises to the chloroplast inner membrane. Its function is as follows. Involved in protein precursor import into chloroplasts. May be part of an intermediate translocation complex acting as a protein-conducting channel at the inner envelope. This chain is Protein TIC 214, found in Cuscuta exaltata (Tall dodder).